The primary structure comprises 106 residues: Cell division protein FtsB (106 aa).

Over 1-3 (MGK) the chain is Cytoplasmic. Residues 4 to 21 (LTLLLLALLGWLQYSLWL) form a helical membrane-spanning segment. The Periplasmic portion of the chain corresponds to 22 to 106 (GKNGVHDYVR…ASSSQNNLQK (85 aa)). The stretch at 40-62 (QGSNAKLKARNDQLFAEIDDLNG) forms a coiled coil.

The protein belongs to the FtsB family. In terms of assembly, part of a complex composed of FtsB, FtsL and FtsQ.

The protein localises to the cell inner membrane. Its function is as follows. Essential cell division protein. May link together the upstream cell division proteins, which are predominantly cytoplasmic, with the downstream cell division proteins, which are predominantly periplasmic. This chain is Cell division protein FtsB, found in Serratia proteamaculans (strain 568).